We begin with the raw amino-acid sequence, 521 residues long: Glucose-6-phosphate isomerase (521 aa).

The active-site Proton donor is E327. Active-site residues include H358 and K486.

This sequence belongs to the GPI family.

The protein resides in the cytoplasm. The catalysed reaction is alpha-D-glucose 6-phosphate = beta-D-fructose 6-phosphate. The protein operates within carbohydrate biosynthesis; gluconeogenesis. It participates in carbohydrate degradation; glycolysis; D-glyceraldehyde 3-phosphate and glycerone phosphate from D-glucose: step 2/4. Functionally, catalyzes the reversible isomerization of glucose-6-phosphate to fructose-6-phosphate. The sequence is that of Glucose-6-phosphate isomerase from Bordetella bronchiseptica (strain ATCC BAA-588 / NCTC 13252 / RB50) (Alcaligenes bronchisepticus).